Reading from the N-terminus, the 484-residue chain is Antibiotic efflux pump outer membrane protein ArpC (484 aa).

A signal peptide spans 1–17; it reads MTKSLLSLAVTAFILGG. C18 carries N-palmitoyl cysteine lipidation. C18 is lipidated: S-diacylglycerol cysteine.

This sequence belongs to the outer membrane factor (OMF) (TC 1.B.17) family.

Its subcellular location is the cell outer membrane. Functionally, the outer membrane component of an antibiotic efflux pump. Confers resistance to numerous structurally unrelated antibiotics such as carbenicillin, chloramphenicol, erythromycin, novobiocin, streptomycin and tetracycline. Is not involved in organic solvent efflux. In Pseudomonas putida (Arthrobacter siderocapsulatus), this protein is Antibiotic efflux pump outer membrane protein ArpC (arpC).